The primary structure comprises 159 residues: Cytochrome P450 monooxygenase aunB (159 aa).

Residue cysteine 134 participates in heme binding.

The protein belongs to the cytochrome P450 family. Requires heme as cofactor.

It carries out the reaction 2 fonsecin B + NADPH + O2 + H(+) = aurasperone B + NADP(+) + 2 H2O. The catalysed reaction is 2 rubrofusarin B + NADPH + O2 + H(+) = aurasperone A + NADP(+) + 2 H2O. It participates in secondary metabolite biosynthesis. Functionally, cytochrome P450 monooxygenase; part of the gene cluster that mediates the biosynthesis of aurasperone B, a dimeric gamma-naphthopyrone. The first step in the biosynthesis of aurasperone B is the production of gamma-naphthopyrone precursor YWA1 by the non-reducing polyketide synthase albA, via condensation of one acetyl-CoA starter unit with 6 malonyl-CoA units. YWA1 is then methylated by aunE at position C-6 to yield foncesin which is further methylated at position C-8 by aunD to produce fonsecin B. A key enzyme in the biosynthetic pathway is the cytochrome P450 monooxygenase aunB which catalyzes the oxidative dimerization of fonsecin B to aurasperone B. AunB also catalyzes the oxidative dimerization of rubrofusarin B into aurasperone A. This is Cytochrome P450 monooxygenase aunB from Aspergillus niger (strain ATCC 1015 / CBS 113.46 / FGSC A1144 / LSHB Ac4 / NCTC 3858a / NRRL 328 / USDA 3528.7).